The primary structure comprises 704 residues: Polyribonucleotide nucleotidyltransferase (704 aa).

Mg(2+) is bound by residues Asp-487 and Asp-493. The KH domain maps to 554–613 (PRLLTIKIHPDKIREVIGKGGSTIQAITKETGTQIDIQDDGTIIIASVNAIAAQAAKSRI). Residues 623–691 (GRIYEGKVAK…KQGRIRLSIK (69 aa)) enclose the S1 motif domain.

It belongs to the polyribonucleotide nucleotidyltransferase family. In terms of assembly, component of the RNA degradosome, which is a multiprotein complex involved in RNA processing and mRNA degradation. It depends on Mg(2+) as a cofactor.

It is found in the cytoplasm. It carries out the reaction RNA(n+1) + phosphate = RNA(n) + a ribonucleoside 5'-diphosphate. Functionally, involved in mRNA degradation. Catalyzes the phosphorolysis of single-stranded polyribonucleotides processively in the 3'- to 5'-direction. This is Polyribonucleotide nucleotidyltransferase from Xanthomonas campestris pv. campestris (strain 8004).